A 234-amino-acid chain; its full sequence is Peptidyl-prolyl cis-trans isomerase, rhodopsin-specific isozyme (234 aa).

A signal peptide spans methionine 1–glycine 19. A PPIase cyclophilin-type domain is found at tyrosine 29–glutamate 187. The N-linked (GlcNAc...) asparagine glycan is linked to asparagine 67. Residues isoleucine 202–isoleucine 222 traverse the membrane as a helical segment.

This sequence belongs to the cyclophilin-type PPIase family. As to expression, expressed specifically in photoreceptor cells.

The protein localises to the membrane. It carries out the reaction [protein]-peptidylproline (omega=180) = [protein]-peptidylproline (omega=0). PPIases accelerate the folding of proteins. It catalyzes the cis-trans isomerization of proline imidic peptide bonds in oligopeptides. Acts on the folding of rhodopsin RH1 and RH2 (but not RH3) and is required for visual transduction. This Calliphora vicina (Blue blowfly) protein is Peptidyl-prolyl cis-trans isomerase, rhodopsin-specific isozyme (NINAA).